A 94-amino-acid polypeptide reads, in one-letter code: Co-chaperonin GroES (94 aa).

It belongs to the GroES chaperonin family. As to quaternary structure, heptamer of 7 subunits arranged in a ring. Interacts with the chaperonin GroEL.

The protein localises to the cytoplasm. Functionally, together with the chaperonin GroEL, plays an essential role in assisting protein folding. The GroEL-GroES system forms a nano-cage that allows encapsulation of the non-native substrate proteins and provides a physical environment optimized to promote and accelerate protein folding. GroES binds to the apical surface of the GroEL ring, thereby capping the opening of the GroEL channel. The polypeptide is Co-chaperonin GroES (Streptococcus pneumoniae (strain Hungary19A-6)).